Reading from the N-terminus, the 406-residue chain is Tryptophan synthase beta chain (406 aa).

K99 is subject to N6-(pyridoxal phosphate)lysine.

This sequence belongs to the TrpB family. In terms of assembly, tetramer of two alpha and two beta chains. The cofactor is pyridoxal 5'-phosphate.

It carries out the reaction (1S,2R)-1-C-(indol-3-yl)glycerol 3-phosphate + L-serine = D-glyceraldehyde 3-phosphate + L-tryptophan + H2O. It functions in the pathway amino-acid biosynthesis; L-tryptophan biosynthesis; L-tryptophan from chorismate: step 5/5. In terms of biological role, the beta subunit is responsible for the synthesis of L-tryptophan from indole and L-serine. Essential for production of nod factors and establishment of symbiosis. This Rhizobium etli (strain ATCC 51251 / DSM 11541 / JCM 21823 / NBRC 15573 / CFN 42) protein is Tryptophan synthase beta chain.